The primary structure comprises 427 residues: Trigger factor (427 aa).

Positions 163 to 248 (GDTVVIDFVG…IHEVKTKEVP (86 aa)) constitute a PPIase FKBP-type domain.

This sequence belongs to the FKBP-type PPIase family. Tig subfamily.

Its subcellular location is the cytoplasm. The catalysed reaction is [protein]-peptidylproline (omega=180) = [protein]-peptidylproline (omega=0). Functionally, involved in protein export. Acts as a chaperone by maintaining the newly synthesized protein in an open conformation. Functions as a peptidyl-prolyl cis-trans isomerase. The protein is Trigger factor of Streptococcus agalactiae serotype Ia (strain ATCC 27591 / A909 / CDC SS700).